The following is a 339-amino-acid chain: D-alanine--D-alanine ligase (339 aa).

An ATP-grasp domain is found at 115–327 (KHIFRSLGID…FNELVKIIIE (213 aa)). 142-211 (KIDYPYVLKP…EEYIPGIELH (70 aa)) contributes to the ATP binding site. Mg(2+)-binding residues include Asp279, Glu293, and Asn295.

The protein belongs to the D-alanine--D-alanine ligase family. Mg(2+) serves as cofactor. The cofactor is Mn(2+).

The protein resides in the cytoplasm. It carries out the reaction 2 D-alanine + ATP = D-alanyl-D-alanine + ADP + phosphate + H(+). It functions in the pathway cell wall biogenesis; peptidoglycan biosynthesis. Functionally, cell wall formation. This is D-alanine--D-alanine ligase from Wolbachia sp. subsp. Brugia malayi (strain TRS).